The primary structure comprises 466 residues: UDP-N-acetylmuramoylalanine--D-glutamate ligase (466 aa).

128–134 (GTNGKST) lines the ATP pocket.

Belongs to the MurCDEF family.

The protein resides in the cytoplasm. It catalyses the reaction UDP-N-acetyl-alpha-D-muramoyl-L-alanine + D-glutamate + ATP = UDP-N-acetyl-alpha-D-muramoyl-L-alanyl-D-glutamate + ADP + phosphate + H(+). It participates in cell wall biogenesis; peptidoglycan biosynthesis. Its function is as follows. Cell wall formation. Catalyzes the addition of glutamate to the nucleotide precursor UDP-N-acetylmuramoyl-L-alanine (UMA). The protein is UDP-N-acetylmuramoylalanine--D-glutamate ligase of Bartonella henselae (strain ATCC 49882 / DSM 28221 / CCUG 30454 / Houston 1) (Rochalimaea henselae).